Reading from the N-terminus, the 370-residue chain is 4-hydroxy-3-methylbut-2-en-1-yl diphosphate synthase (flavodoxin) (370 aa).

The [4Fe-4S] cluster site is built by cysteine 265, cysteine 268, cysteine 300, and glutamate 307.

The protein belongs to the IspG family. It depends on [4Fe-4S] cluster as a cofactor.

It catalyses the reaction (2E)-4-hydroxy-3-methylbut-2-enyl diphosphate + oxidized [flavodoxin] + H2O + 2 H(+) = 2-C-methyl-D-erythritol 2,4-cyclic diphosphate + reduced [flavodoxin]. The protein operates within isoprenoid biosynthesis; isopentenyl diphosphate biosynthesis via DXP pathway; isopentenyl diphosphate from 1-deoxy-D-xylulose 5-phosphate: step 5/6. Its function is as follows. Converts 2C-methyl-D-erythritol 2,4-cyclodiphosphate (ME-2,4cPP) into 1-hydroxy-2-methyl-2-(E)-butenyl 4-diphosphate. This chain is 4-hydroxy-3-methylbut-2-en-1-yl diphosphate synthase (flavodoxin), found in Symbiobacterium thermophilum (strain DSM 24528 / JCM 14929 / IAM 14863 / T).